Here is a 69-residue protein sequence, read N- to C-terminus: Sperm protamine P1 (69 aa).

2 stretches are compositionally biased toward basic residues: residues 1 to 30 (MARF…RRGG) and 37 to 69 (KITR…RRRN). The interval 1-69 (MARFRPSRSR…SRRRRRRRRN (69 aa)) is disordered.

It belongs to the protamine P1 family. As to expression, testis.

The protein localises to the nucleus. It is found in the chromosome. Protamines substitute for histones in the chromatin of sperm during the haploid phase of spermatogenesis. They compact sperm DNA into a highly condensed, stable and inactive complex. In Tachyglossus aculeatus aculeatus (Southeast Australian short-beaked echidna), this protein is Sperm protamine P1 (PRM1).